The chain runs to 221 residues: Epididymal secretory glutathione peroxidase (221 aa).

The N-terminal stretch at 1-21 (MAIQLRVFYLVPLLLASYVQT) is a signal peptide. The active site involves cysteine 73.

This sequence belongs to the glutathione peroxidase family. In terms of tissue distribution, epididymis.

It localises to the secreted. The enzyme catalyses 2 glutathione + H2O2 = glutathione disulfide + 2 H2O. In terms of biological role, protects cells and enzymes from oxidative damage, by catalyzing the reduction of hydrogen peroxide, lipid peroxides and organic hydroperoxide, by glutathione. May constitute a glutathione peroxidase-like protective system against peroxide damage in sperm membrane lipids. The polypeptide is Epididymal secretory glutathione peroxidase (Gpx5) (Rattus norvegicus (Rat)).